The sequence spans 132 residues: Riboflavin kinase (132 aa).

G13–S18 lines the CDP pocket. Residues T40 and N42 each contribute to the Mg(2+) site. 2 residues coordinate FMN: T98 and E106. Position 111-114 (V111–R114) interacts with CDP.

Belongs to the archaeal riboflavin kinase family. Requires Mg(2+) as cofactor.

The catalysed reaction is riboflavin + CTP = CDP + FMN + H(+). It participates in cofactor biosynthesis; FMN biosynthesis; FMN from riboflavin (CTP route): step 1/1. In terms of biological role, catalyzes the CTP-dependent phosphorylation of riboflavin (vitamin B2) to form flavin mononucleotide (FMN). This Aeropyrum pernix (strain ATCC 700893 / DSM 11879 / JCM 9820 / NBRC 100138 / K1) protein is Riboflavin kinase.